A 418-amino-acid chain; its full sequence is Elongation factor 1-gamma 1 (418 aa).

The region spanning 1-82 (MALVLHTFDG…YVTRSKSDNP (82 aa)) is the GST N-terminal domain. The GST C-terminal domain maps to 87-213 (SLIEYAHIEQ…GDVKQADSVP (127 aa)). The segment at 211–265 (SVPQVQKKAAAPKEQKPKEAKKEAPKEAPKPKAAEKPEEEEEAPKPKPKNPLDLL) is disordered. Residues 221–246 (APKEQKPKEAKKEAPKEAPKPKAAEK) show a composition bias toward basic and acidic residues. One can recognise an EF-1-gamma C-terminal domain in the interval 258–418 (PKNPLDLLPP…EALLDAKCFK (161 aa)).

EF-1 is composed of four subunits: alpha, beta, delta, and gamma.

In terms of biological role, probably plays a role in anchoring the complex to other cellular components. This Oryza sativa subsp. japonica (Rice) protein is Elongation factor 1-gamma 1.